The sequence spans 353 residues: C-X-C chemokine receptor type 4 (353 aa).

The interval 1-22 is important for chemokine binding and signaling; that stretch reads MDGFRIFTSDNYTEDDLGSGDY. Residues 1–39 lie on the Extracellular side of the membrane; that stretch reads MDGFRIFTSDNYTEDDLGSGDYDSIKEPCFREENAHFNR. Residue Asn-11 is glycosylated (N-linked (GlcNAc...) asparagine). Tyr-12 is subject to Sulfotyrosine. Ser-19 is a glycosylation site (O-linked (Xyl...) (chondroitin sulfate) serine). Tyr-22 carries the post-translational modification Sulfotyrosine. 2 disulfide bridges follow: Cys-29-Cys-275 and Cys-110-Cys-187. A helical transmembrane segment spans residues 40–64; the sequence is IFLPTVYSIIFLTGIVGNGLVILVM. The Cytoplasmic portion of the chain corresponds to 65-78; sequence GYQKKLRSMTDKYR. Residues 79–100 traverse the membrane as a helical segment; it reads LHLSVADLLFVLTLPFWAVDAV. The segment at 95–98 is chemokine binding; that stretch reads WAVD. Residues 101 to 111 are Extracellular-facing; that stretch reads ANWYFGKFLCK. A helical membrane pass occupies residues 112 to 131; it reads AVHVIYTVNLYSSVLILAFI. Positions 114–118 are chemokine binding; sequence HVIYT. Over 132-155 the chain is Cytoplasmic; that stretch reads SLDRYLAIVHATNSQRPRKLLAEK. Positions 134-136 match the Important for signaling motif; sequence DRY. The interval 136–148 is involved in dimerization; when bound to chemokine; that stretch reads YLAIVHATNSQRP. The chain crosses the membrane as a helical span at residues 156-175; the sequence is VVYVGVWIPALLLTIPDFIF. Residues 176 to 196 are Extracellular-facing; the sequence is ANVREGDGRYICDRFYPNDLW. Residues 187-191 form a chemokine binding, important for signaling region; sequence CDRFY. The tract at residues 192–211 is involved in dimerization; the sequence is PNDLWLVVFQFQHIMVGLIL. A helical membrane pass occupies residues 197–217; it reads LVVFQFQHIMVGLILPGIVIL. Residues 218 to 242 are Cytoplasmic-facing; it reads SCYCIIISKLSHSKGYQKRKALKTT. A helical membrane pass occupies residues 243–262; that stretch reads VILILAFFACWLPYYIGISI. Residues 263-283 lie on the Extracellular side of the membrane; sequence DSFILLEIIQQGCEFESTVHK. Residues 267 to 269 are involved in dimerization; that stretch reads LLE. The helical transmembrane segment at 284-303 threads the bilayer; it reads WISITEALAFFHCCLNPILY. Topologically, residues 304 to 353 are cytoplasmic; the sequence is AFLGAKFKTSAQHALTSVSRGSSLKILSKGKRGGHSSVSTESESSSFHSS. Phosphoserine is present on residues Ser-320 and Ser-322. 2 positions are modified to phosphoserine; by PKC and GRK6: Ser-325 and Ser-326. The segment at 330 to 353 is disordered; it reads LSKGKRGGHSSVSTESESSSFHSS. Ser-331 is modified (phosphoserine; by GRK6). Lys-332 participates in a covalent cross-link: Glycyl lysine isopeptide (Lys-Gly) (interchain with G-Cter in ubiquitin). The span at 338 to 353 shows a compositional bias: low complexity; that stretch reads HSSVSTESESSSFHSS. Ser-340 bears the Phosphoserine; by GRK6 mark. Phosphoserine occurs at positions 349 and 352.

Belongs to the G-protein coupled receptor 1 family. As to quaternary structure, monomer. Can form homodimers. Interacts with CD164. Interacts with ARRB2; the interaction is dependent on the C-terminal phosphorylation of CXCR4 and allows activation of MAPK1 and MAPK3. Interacts with ARR3; the interaction is dependent on the C-terminal phosphorylation of CXCR4 and modulates calcium mobilization. Interacts with RNF113A; the interaction, enhanced by CXCL12, promotes CXCR4 ubiquitination and subsequent degradation. Interacts (via the cytoplasmic C-terminal) with ITCH (via the WW domains I and II); the interaction, enhanced by CXCL12, promotes CXCR4 ubiquitination and leads to its degradation. Interacts with extracellular ubiquitin. Interacts with DBN1; this interaction is enhanced by antigenic stimulation. Following LPS binding, may form a complex with GDF5, HSP90AA1 and HSPA8. Post-translationally, phosphorylated on agonist stimulation. Rapidly phosphorylated on serine and threonine residues in the C-terminal. Phosphorylation at Ser-325 and Ser-326 leads to recruitment of ITCH, ubiquitination and protein degradation. Ubiquitinated after ligand binding, leading to its degradation. Ubiquitinated by ITCH at the cell membrane on agonist stimulation. The ubiquitin-dependent mechanism, endosomal sorting complex required for transport (ESCRT), then targets CXCR4 for lysosomal degradation. This process is dependent also on prior Ser-/Thr-phosphorylation in the C-terminal of CXCR4. Also binding of ARRB1 to STAM negatively regulates CXCR4 sorting to lysosomes though modulating ubiquitination of SFR5S. In terms of processing, sulfation is required for efficient binding of CXCL12/SDF-1alpha and promotes its dimerization. Post-translationally, O- and N-glycosylated. N-glycosylation can mask coreceptor function. The O-glycosylation chondroitin sulfate attachment does not affect interaction with CXCL12/SDF-1alpha nor its coreceptor activity.

Its subcellular location is the cell membrane. The protein localises to the cell junction. It is found in the early endosome. It localises to the late endosome. The protein resides in the lysosome. In terms of biological role, receptor for the C-X-C chemokine CXCL12/SDF-1 that transduces a signal by increasing intracellular calcium ion levels and enhancing MAPK1/MAPK3 activation. Involved in the AKT signaling cascade. Plays a role in regulation of cell migration, e.g. during wound healing. Acts as a receptor for extracellular ubiquitin; leading to enhanced intracellular calcium ions and reduced cellular cAMP levels. Binds bacterial lipopolysaccharide (LPS) et mediates LPS-induced inflammatory response, including TNF secretion by monocytes. Involved in hematopoiesis and in cardiac ventricular septum formation. Also plays an essential role in vascularization of the gastrointestinal tract, probably by regulating vascular branching and/or remodeling processes in endothelial cells. Involved in cerebellar development. In the CNS, could mediate hippocampal-neuron survival. The sequence is that of C-X-C chemokine receptor type 4 (CXCR4) from Sus scrofa (Pig).